A 484-amino-acid chain; its full sequence is UDP-N-acetylmuramoyl-L-alanyl-D-glutamate--L-lysine ligase (484 aa).

Ser-43 is a UDP-N-acetyl-alpha-D-muramoyl-L-alanyl-D-glutamate binding site. 119–125 lines the ATP pocket; it reads GTKGKTT. UDP-N-acetyl-alpha-D-muramoyl-L-alanyl-D-glutamate contacts are provided by residues 161–162, Ser-188, and Arg-196; that span reads TT. At Lys-230 the chain carries N6-carboxylysine. The L-lysine recognition motif motif lies at 405 to 408; that stretch reads DDPN.

The protein belongs to the MurCDEF family. MurE subfamily. Post-translationally, carboxylation is probably crucial for Mg(2+) binding and, consequently, for the gamma-phosphate positioning of ATP.

It is found in the cytoplasm. The catalysed reaction is UDP-N-acetyl-alpha-D-muramoyl-L-alanyl-D-glutamate + L-lysine + ATP = UDP-N-acetyl-alpha-D-muramoyl-L-alanyl-gamma-D-glutamyl-L-lysine + ADP + phosphate + H(+). Its pathway is cell wall biogenesis; peptidoglycan biosynthesis. Catalyzes the addition of L-lysine to the nucleotide precursor UDP-N-acetylmuramoyl-L-alanyl-D-glutamate (UMAG) in the biosynthesis of bacterial cell-wall peptidoglycan. The chain is UDP-N-acetylmuramoyl-L-alanyl-D-glutamate--L-lysine ligase from Streptococcus agalactiae serotype Ia (strain ATCC 27591 / A909 / CDC SS700).